The following is a 510-amino-acid chain: Laccase (510 aa).

4 Plastocyanin-like domains span residues 45–79, 99–174, 242–317, and 372–506; these read PTKL…LPLK, KTVV…LISD, YLEV…IVLK, and LTLT…MRPM. Cu cation-binding residues include histidine 103, histidine 105, histidine 151, and histidine 153. The Cu cation site is built by histidine 419, histidine 422, histidine 424, histidine 491, cysteine 492, histidine 493, histidine 497, and methionine 502.

This sequence belongs to the multicopper oxidase family. Requires Cu(2+) as cofactor.

The catalysed reaction is 4 hydroquinone + O2 = 4 benzosemiquinone + 2 H2O. With respect to regulation, resistant to alkali and organic solvents such as methanol, ethanol and acetone. Resistant to EDTA, which might be explained by the spatial protection of copper ions in the active sites. Inhibited by DMSO. Strongly inhibited by Fe(2+) and DTT. Multicopper oxidase that catalyzes the oxidation of a variety of substrates, including phenolic and non-phenolic compounds. Substrates include 2,6-dimethoxyphenol (2,6-DMP) and the non-phenolic compound 2,2'-azino-bis(3-ethylbenzothiazoline-6-sulfonic acid) (ABTS). Cannot use guaiacol and catechol. This Bacillus stratosphericus protein is Laccase.